Here is a 195-residue protein sequence, read N- to C-terminus: MARNRQPVLKKCRALGIDPVILGVKKSSNRQIRPNANKKPTEYATQLREKQKAKFIYNVMEKQFRKIYEEAARKLGVTGLTLIEYLERRLENVVYRLGFAKTRRQARQIVSHGHIAVNGRRVNIASFRVKVGDIVSVIENSKNVELIKLAVEDATPPAWLELDRAAFSGKVLQNPTKDDLDFDLNESLIVEFYSR.

The S4 RNA-binding domain maps to 88-150; it reads RRLENVVYRL…SKNVELIKLA (63 aa).

It belongs to the universal ribosomal protein uS4 family. In terms of assembly, part of the 30S ribosomal subunit. Contacts protein S5. The interaction surface between S4 and S5 is involved in control of translational fidelity.

In terms of biological role, one of the primary rRNA binding proteins, it binds directly to 16S rRNA where it nucleates assembly of the body of the 30S subunit. Its function is as follows. With S5 and S12 plays an important role in translational accuracy. The sequence is that of Small ribosomal subunit protein uS4 from Fusobacterium nucleatum subsp. nucleatum (strain ATCC 25586 / DSM 15643 / BCRC 10681 / CIP 101130 / JCM 8532 / KCTC 2640 / LMG 13131 / VPI 4355).